A 94-amino-acid chain; its full sequence is Large ribosomal subunit protein eL42 (94 aa).

Zn(2+)-binding residues include C11, C14, C71, and C74. The C4-type zinc-finger motif lies at 11–74 (CPFCKKHTIH…LDLRFRCTEC (64 aa)).

Belongs to the eukaryotic ribosomal protein eL42 family. Part of the 50S ribosomal subunit. Requires Zn(2+) as cofactor.

In terms of biological role, binds to the 23S rRNA. This chain is Large ribosomal subunit protein eL42, found in Pyrococcus furiosus (strain ATCC 43587 / DSM 3638 / JCM 8422 / Vc1).